Reading from the N-terminus, the 363-residue chain is Autophagy-related protein 3 (363 aa).

Basic and acidic residues-rich tracts occupy residues 84-106 (DFAG…RGDG) and 129-138 (ARVRDVRTVD). A flexible region region spans residues 84–171 (DFAGDAGHDE…DDEAIIRDPK (88 aa)). A disordered region spans residues 84-174 (DFAGDAGHDE…AIIRDPKADN (91 aa)). The span at 139–164 (ESGEMGEREDDEDDIPDMEDDDDDDE) shows a compositional bias: acidic residues. Catalysis depends on Cys247, which acts as the Glycyl thioester intermediate. The interval 251 to 339 (SVMKTLLDRA…EEEVAIRVDQ (89 aa)) is handle region.

The protein belongs to the ATG3 family. As to quaternary structure, monomer. Interacts with atg8 through an intermediate thioester bond through the C-terminal Gly of atg8. Interacts with the C-terminal region of the E1-like atg7 enzyme. Also interacts with the atg12-atg5 conjugate.

It localises to the cytoplasm. Functionally, E2 conjugating enzyme required for the cytoplasm to vacuole transport (Cvt) and autophagy. Required for selective autophagic degradation of the nucleus (nucleophagy) as well as for mitophagy which contributes to regulate mitochondrial quantity and quality by eliminating the mitochondria to a basal level to fulfill cellular energy requirements and preventing excess ROS production. Responsible for the E2-like covalent binding of phosphatidylethanolamine to the C-terminal Gly of atg8. The atg12-atg5 conjugate plays a role of an E3 and promotes the transfer of atg8 from atg3 to phosphatidylethanolamine (PE). This step is required for the membrane association of atg8. The formation of the atg8-phosphatidylethanolamine conjugate is essential for autophagy and for the cytoplasm to vacuole transport (Cvt). The atg8-PE conjugate mediates tethering between adjacent membranes and stimulates membrane hemifusion, leading to expansion of the autophagosomal membrane during autophagy. Required for normal mycelial growth and conidiogenesis, and regulates sclerotial formation. Plays an essential role in pathogenesis. This chain is Autophagy-related protein 3, found in Botryotinia fuckeliana (strain BcDW1) (Noble rot fungus).